The primary structure comprises 458 residues: Protochlorophyllide reductase, chloroplastic (458 aa).

Belongs to the short-chain dehydrogenases/reductases (SDR) family. POR subfamily.

It is found in the plastid. Its subcellular location is the chloroplast. The catalysed reaction is chlorophyllide a + NADP(+) = protochlorophyllide a + NADPH + H(+). The protein operates within porphyrin-containing compound metabolism; chlorophyll biosynthesis. Functionally, phototransformation of protochlorophyllide (Pchlide) to chlorophyllide (Chlide). This Marchantia paleacea (Liverwort) protein is Protochlorophyllide reductase, chloroplastic (PORA).